The following is a 266-amino-acid chain: Pyridoxal phosphate phosphatase YigL (266 aa).

The active-site Nucleophile is aspartate 8. Aspartate 8 lines the Mg(2+) pocket. Residue leucine 9 participates in phosphate binding. Aspartate 10 is a Mg(2+) binding site. Phosphate is bound by residues 42–43 (TG) and lysine 191. Aspartate 214 is a Mg(2+) binding site. Residue asparagine 217 participates in phosphate binding.

This sequence belongs to the HAD-like hydrolase superfamily. Cof family. Mg(2+) is required as a cofactor. The cofactor is Mn(2+). Requires Co(2+) as cofactor. Zn(2+) serves as cofactor.

It catalyses the reaction pyridoxal 5'-phosphate + H2O = pyridoxal + phosphate. The catalysed reaction is sugar phosphate + H2O = sugar + phosphate.. Its function is as follows. Catalyzes Strongly the dephosphorylation of pyridoxal-phosphate (PLP) and moderately the dephosphorylation of 2-deoxyglucose 6-phosphate (2bGLU6P) and beta-glucose 6-phosphate (bGlu6P). Also hydrolyzes both purines (GMP and IMP) and pyrimidines as secondary substrates. The chain is Pyridoxal phosphate phosphatase YigL (yigL) from Escherichia coli (strain K12).